Reading from the N-terminus, the 460-residue chain is ATP synthase subunit beta (460 aa).

Position 149 to 156 (149 to 156 (GGAGVGKT)) interacts with ATP.

The protein belongs to the ATPase alpha/beta chains family. As to quaternary structure, F-type ATPases have 2 components, CF(1) - the catalytic core - and CF(0) - the membrane proton channel. CF(1) has five subunits: alpha(3), beta(3), gamma(1), delta(1), epsilon(1). CF(0) has three main subunits: a(1), b(2) and c(9-12). The alpha and beta chains form an alternating ring which encloses part of the gamma chain. CF(1) is attached to CF(0) by a central stalk formed by the gamma and epsilon chains, while a peripheral stalk is formed by the delta and b chains.

The protein localises to the cell inner membrane. The catalysed reaction is ATP + H2O + 4 H(+)(in) = ADP + phosphate + 5 H(+)(out). Produces ATP from ADP in the presence of a proton gradient across the membrane. The catalytic sites are hosted primarily by the beta subunits. This Nitrosomonas europaea (strain ATCC 19718 / CIP 103999 / KCTC 2705 / NBRC 14298) protein is ATP synthase subunit beta.